Consider the following 179-residue polypeptide: Large ribosomal subunit protein uL5 (179 aa).

This sequence belongs to the universal ribosomal protein uL5 family. As to quaternary structure, part of the 50S ribosomal subunit; part of the 5S rRNA/L5/L18/L25 subcomplex. Contacts the 5S rRNA and the P site tRNA. Forms a bridge to the 30S subunit in the 70S ribosome.

In terms of biological role, this is one of the proteins that bind and probably mediate the attachment of the 5S RNA into the large ribosomal subunit, where it forms part of the central protuberance. In the 70S ribosome it contacts protein S13 of the 30S subunit (bridge B1b), connecting the 2 subunits; this bridge is implicated in subunit movement. Contacts the P site tRNA; the 5S rRNA and some of its associated proteins might help stabilize positioning of ribosome-bound tRNAs. This chain is Large ribosomal subunit protein uL5, found in Microcystis aeruginosa (strain NIES-843 / IAM M-2473).